The sequence spans 644 residues: DNA mismatch repair protein MutL (644 aa).

The tract at residues 363 to 405 (GTFNPFTDDKTNQHYTKAGSGSGSGYSSGSSSSSGSGSGSSYS) is disordered. The segment covering 389–405 (SSGSSSSSGSGSGSSYS) has biased composition (low complexity).

The protein belongs to the DNA mismatch repair MutL/HexB family.

This protein is involved in the repair of mismatches in DNA. It is required for dam-dependent methyl-directed DNA mismatch repair. May act as a 'molecular matchmaker', a protein that promotes the formation of a stable complex between two or more DNA-binding proteins in an ATP-dependent manner without itself being part of a final effector complex. This Flavobacterium johnsoniae (strain ATCC 17061 / DSM 2064 / JCM 8514 / BCRC 14874 / CCUG 350202 / NBRC 14942 / NCIMB 11054 / UW101) (Cytophaga johnsonae) protein is DNA mismatch repair protein MutL.